The following is a 360-amino-acid chain: UDP-N-acetylglucosamine--N-acetylmuramyl-(pentapeptide) pyrophosphoryl-undecaprenol N-acetylglucosamine transferase (360 aa).

Residues 17–19, asparagine 130, arginine 166, serine 200, isoleucine 247, and glutamine 291 contribute to the UDP-N-acetyl-alpha-D-glucosamine site; that span reads TAG.

The protein belongs to the glycosyltransferase 28 family. MurG subfamily.

The protein resides in the cell membrane. It carries out the reaction di-trans,octa-cis-undecaprenyl diphospho-N-acetyl-alpha-D-muramoyl-L-alanyl-D-glutamyl-meso-2,6-diaminopimeloyl-D-alanyl-D-alanine + UDP-N-acetyl-alpha-D-glucosamine = di-trans,octa-cis-undecaprenyl diphospho-[N-acetyl-alpha-D-glucosaminyl-(1-&gt;4)]-N-acetyl-alpha-D-muramoyl-L-alanyl-D-glutamyl-meso-2,6-diaminopimeloyl-D-alanyl-D-alanine + UDP + H(+). Its pathway is cell wall biogenesis; peptidoglycan biosynthesis. Functionally, cell wall formation. Catalyzes the transfer of a GlcNAc subunit on undecaprenyl-pyrophosphoryl-MurNAc-pentapeptide (lipid intermediate I) to form undecaprenyl-pyrophosphoryl-MurNAc-(pentapeptide)GlcNAc (lipid intermediate II). This Corynebacterium efficiens (strain DSM 44549 / YS-314 / AJ 12310 / JCM 11189 / NBRC 100395) protein is UDP-N-acetylglucosamine--N-acetylmuramyl-(pentapeptide) pyrophosphoryl-undecaprenol N-acetylglucosamine transferase.